Consider the following 729-residue polypeptide: MSSRPLLKLALSLHDRLDELCSRGQIALVGYGLDVAAVAAVARHECFPIVDDEEVIARLNESTEILERSCRGSTMIYGVHTGFGGSADTRPDDSSGLGRGLMQLLQTGVLVVENLNISGPSTPQIMMPQSMPSSWTKATTAVRINQCVRGHSAIRHQTVKSLLKLVATQITPIVPLRGSISASGDLMPLSYIAGTLEGSPDIYVTKGSGKSAKIISAHEALGEIGMKPLLLGPREGLGLVNGTATSAATASLAVLDAIQLTLLSTGLTCLVSEGMAARVEWLHPFIAETRPHPGQGEVAAIMRAFLKGSRLVSGLEGEANAHLHTLNVRPDEGLPQDRYPLRTSPQWLGPQFEDLLLAHSQITIELNSTSDNPLTNLKTGAMHHGGNFQATSITSAVEKIRTSLQMVGKLLFSQCTEMINHQMNAGLPPNLAADDPSASFCCKGLDINIAAYQSELSYLSNSISNHVQSAEMHNQAVNSLAFLSTRYTIKAIELLGMMVAGVLYAACQAMDLRVMHATFLDTTTSTLQKAIADLLPNGFKSDDVEKSLATAVQGLRNAWWNNAGSDASERCSITAIAFVQVLCDPSKYHTDTHKEDICLDLTAKEMRQLQDDVRLHLSKAYHKHHSAFLEKPTTEEYIGKGSKALYLWTRQDLGIPMNRGLIDHPSPENLKEPGSVGKRTIGSYVSMIYQGIQDGRLFKRFATASREVGLGDGGVNGTRKRAYADYETP.

Residue tyrosine 77 is the Proton donor/acceptor of the active site. The 5-imidazolinone (Ala-Gly) cross-link spans 182–184 (ASG). Position 183 is a 2,3-didehydroalanine (Ser) (serine 183). Residues asparagine 241, glutamine 336, arginine 342, asparagine 372, lysine 443, glutamate 471, and asparagine 474 each coordinate (E)-cinnamate.

The protein belongs to the PAL/histidase family. Contains an active site 4-methylidene-imidazol-5-one (MIO), which is formed autocatalytically by cyclization and dehydration of residues Ala-Ser-Gly.

The protein localises to the cytoplasm. It carries out the reaction L-phenylalanine = (E)-cinnamate + NH4(+). It functions in the pathway secondary metabolite biosynthesis. Its pathway is phenylpropanoid metabolism; trans-cinnamate biosynthesis; trans-cinnamate from L-phenylalanine: step 1/1. Functionally, phenylalanine ammonia-lyase; part of the gene cluster that mediates the biosynthesis of squalestatin S1 (SQS1, also known as zaragozic acid A), a heavily oxidized fungal polyketide that offers potent cholesterol lowering activity by targeting squalene synthase (SS). SQS1 is composed of a 2,8-dioxobicyclic[3.2.1]octane-3,4,5-tricarboxyclic acid core that is connected to two lipophilic polyketide arms. These initial steps feature the priming of an unusual benzoic acid starter unit onto the highly reducing polyketide synthase pks2, followed by oxaloacetate extension and product release to generate a tricarboxylic acid containing product. The phenylalanine ammonia lyase (PAL) M7 and the acyl-CoA ligase M9 are involved in transforming phenylalanine into benzoyl-CoA. The citrate synthase-like protein R3 is involved in connecting the C-alpha-carbons of the hexaketide chain and oxaloacetate to afford the tricarboxylic acid unit. The potential hydrolytic enzymes, M8 and M10, are in close proximity to pks2 and may participate in product release. On the other side, the tetraketide arm is synthesized by a the squalestatin tetraketide synthase pks1 and enzymatically esterified to the core in the last biosynthetic step, by the acetyltransferase M4. The biosynthesis of the tetraketide must involve 3 rounds of chain extension. After the first and second rounds methyl-transfer occurs, and in all rounds of extension the ketoreductase and dehydratase are active. The enoyl reductase and C-MeT of pks1 are not active in the final round of extension. The acetyltransferase M4 appears to have a broad substrate selectivity for its acyl CoA substrate, allowing the in vitro synthesis of novel squalestatins. The biosynthesis of SQS1 requires several oxidative steps likely performed by oxidoreductases M1, R1 and R2. Finally, in support of the identification of the cluster as being responsible for SQS1 production, the cluster contains a gene encoding a putative squalene synthase (SS) R6, suggesting a likely mechanism for self-resistance. This chain is Phenylalanine ammonia-lyase, found in Phoma sp. (strain ATCC 20986 / MF5453).